We begin with the raw amino-acid sequence, 949 residues long: Serine/threonine-protein kinase KIPK2 (949 aa).

4 disordered regions span residues Leu-79–Ser-116, Thr-323–Ser-344, Ser-407–Val-426, and Ser-495–Ser-525. Residues Thr-81–Ser-94 are compositionally biased toward low complexity. Polar residues-rich tracts occupy residues Ser-407–His-420 and Ser-495–Tyr-512. The span at Ser-513 to Ser-525 shows a compositional bias: low complexity. A Protein kinase domain is found at Phe-559–Phe-898. Residues Leu-565–Val-573 and Lys-588 each bind ATP. The active-site Proton acceptor is Asp-684.

It belongs to the protein kinase superfamily. Ser/Thr protein kinase family. As to quaternary structure, interacts with KCBP, PERK8, PERK9, PERK10 and PERK13.

It catalyses the reaction L-seryl-[protein] + ATP = O-phospho-L-seryl-[protein] + ADP + H(+). It carries out the reaction L-threonyl-[protein] + ATP = O-phospho-L-threonyl-[protein] + ADP + H(+). Functionally, serine/threonine-protein kinase that could be involved in the negative regulation of root growth. The chain is Serine/threonine-protein kinase KIPK2 from Arabidopsis thaliana (Mouse-ear cress).